We begin with the raw amino-acid sequence, 285 residues long: Glutamate racemase (285 aa).

Residues 28-29 and 60-61 contribute to the substrate site; these read DS and YG. Catalysis depends on Cys-92, which acts as the Proton donor/acceptor. Position 93 to 94 (93 to 94) interacts with substrate; the sequence is NT. The Proton donor/acceptor role is filled by Cys-204. 205-206 is a binding site for substrate; the sequence is TH.

This sequence belongs to the aspartate/glutamate racemases family.

It catalyses the reaction L-glutamate = D-glutamate. The protein operates within cell wall biogenesis; peptidoglycan biosynthesis. Its function is as follows. Provides the (R)-glutamate required for cell wall biosynthesis. The protein is Glutamate racemase of Escherichia coli (strain UTI89 / UPEC).